We begin with the raw amino-acid sequence, 48 residues long: uncharacterized protein (48 aa).

The segment at 1 to 48 (MTKIPINIPATSGKIKFGITPSSNKSPSLSPSPSNGQLGGGRGYILEP) is disordered. Residues 21 to 36 (PSSNKSPSLSPSPSNG) show a composition bias toward low complexity. Residues 37 to 48 (QLGGGRGYILEP) show a composition bias toward gly residues.

This is an uncharacterized protein from Dictyostelium discoideum (Social amoeba).